The primary structure comprises 216 residues: CDP-diacylglycerol--glycerol-3-phosphate 3-phosphatidyltransferase (216 aa).

The next 4 membrane-spanning stretches (helical) occupy residues 40–60 (VVSI…FLDG), 88–108 (VMLC…CILY), 141–161 (MGAV…LAGA), and 176–196 (VVPV…FFPI).

This sequence belongs to the CDP-alcohol phosphatidyltransferase class-I family.

It is found in the cell membrane. The enzyme catalyses a CDP-1,2-diacyl-sn-glycerol + sn-glycerol 3-phosphate = a 1,2-diacyl-sn-glycero-3-phospho-(1'-sn-glycero-3'-phosphate) + CMP + H(+). It participates in phospholipid metabolism; phosphatidylglycerol biosynthesis; phosphatidylglycerol from CDP-diacylglycerol: step 1/2. In terms of biological role, this protein catalyzes the committed step to the synthesis of the acidic phospholipids. The chain is CDP-diacylglycerol--glycerol-3-phosphate 3-phosphatidyltransferase (pgsA) from Treponema pallidum (strain Nichols).